The primary structure comprises 461 residues: DNA polymerase delta subunit 3 (461 aa).

Disordered regions lie at residues 148–229 (VAQA…SAKG), 249–380 (VPGQ…KRVL), and 399–461 (YESE…CQKK). Polar residues predominate over residues 155 to 172 (ARSSSQTPSDTSAVSTPP). Positions 205 to 214 (DANKEPKAKE) are enriched in basic and acidic residues. Low complexity predominate over residues 215–228 (APSVSAASSKPSAK). Over residues 279 to 304 (KPGRKTEPAKIQQKDKKSKMKRMDKS) the composition is skewed to basic and acidic residues. Positions 371–380 (GKKRKRKRVL) are enriched in basic residues. Over residues 427-436 (VKKEPKEERK) the composition is skewed to basic and acidic residues. A PIP-box motif is present at residues 451–458 (QISIMGFC).

Component of both the DNA polymerase delta and DNA polymerase zeta complexes. The tetrameric DNA polymerase delta complex (Pol-delta4), which consists of POLD1/p125, POLD2/p50, POLD3/p66/p68 and POLD4/p12, with POLD1 bearing DNA polymerase and 3' to 5' proofreading exonuclease activities.

It localises to the cytoplasm. Its subcellular location is the nucleus. Its function is as follows. Accessory component of both the DNA polymerase delta complex and the DNA polymerase zeta complex. As a component of the trimeric and tetrameric DNA polymerase delta complexes (Pol-delta3 and Pol-delta4, respectively), plays a role in high fidelity genome replication, including in lagging strand synthesis, and repair. Required for optimal Pol-delta activity. Stabilizes the Pol-delta complex and plays a major role in Pol-delta stimulation by PCNA. Pol-delta3 and Pol-delta4 are characterized by the absence or the presence of POLD4. They exhibit differences in catalytic activity. Most notably, Pol-delta3 shows higher proofreading activity than Pol-delta4. Although both Pol-delta3 and Pol-delta4 process Okazaki fragments in vitro, Pol-delta3 may also be better suited to fulfill this task, exhibiting near-absence of strand displacement activity compared to Pol-delta4 and stalling on encounter with the 5'-blocking oligonucleotides. Pol-delta3 idling process may avoid the formation of a gap, while maintaining a nick that can be readily ligated. Along with DNA polymerase kappa, DNA polymerase delta carries out approximately half of nucleotide excision repair (NER) synthesis following UV irradiation. In this context, POLD3, along with PCNA and RFC1-replication factor C complex, is required to recruit POLD1, the catalytic subunit of the polymerase delta complex, to DNA damage sites. Under conditions of DNA replication stress, required for the repair of broken replication forks through break-induced replication (BIR). Involved in the translesion synthesis (TLS) of templates carrying O6-methylguanine or abasic sites performed by Pol-delta4, independently of DNA polymerase zeta (REV3L) or eta (POLH). Facilitates abasic site bypass by DNA polymerase delta by promoting extension from the nucleotide inserted opposite the lesion. Also involved in TLS, as a component of the tetrameric DNA polymerase zeta complex. Along with POLD2, dramatically increases the efficiency and processivity of DNA synthesis of the DNA polymerase zeta complex compared to the minimal zeta complex, consisting of only REV3L and REV7. The chain is DNA polymerase delta subunit 3 (POLD3) from Gallus gallus (Chicken).